An 833-amino-acid polypeptide reads, in one-letter code: Leucine--tRNA ligase (833 aa).

The 'HIGH' region signature appears at 41-52 (PYPSGAGLHVGH). The 'KMSKS' region motif lies at 610-614 (KMSKS). Lys-613 is an ATP binding site.

The protein belongs to the class-I aminoacyl-tRNA synthetase family.

Its subcellular location is the cytoplasm. The enzyme catalyses tRNA(Leu) + L-leucine + ATP = L-leucyl-tRNA(Leu) + AMP + diphosphate. The sequence is that of Leucine--tRNA ligase from Streptococcus pneumoniae (strain Hungary19A-6).